The chain runs to 735 residues: Protein PAT1 homolog 2 (735 aa).

Disordered regions lie at residues 39-93 (TFGL…REVK) and 336-366 (QLHP…PDPY). 2 stretches are compositionally biased toward basic and acidic residues: residues 49 to 59 (EPTKQEEDHKK) and 67 to 93 (PKIE…REVK). Low complexity predominate over residues 346–356 (SQRQRPQSSSR).

Belongs to the PAT1 family. Interacts with ribonucleoprotein complex components. Interacts with cpeb.

Its subcellular location is the cytoplasm. It is found in the nucleus. Its function is as follows. RNA-binding protein that acts as a translational repressor. This chain is Protein PAT1 homolog 2 (patl2), found in Xenopus tropicalis (Western clawed frog).